The primary structure comprises 193 residues: Mesogenin-1 (193 aa).

The tract at residues 34-59 (GPFELNQASPSQSLSPAPSLESYSSS) is disordered. Positions 40–59 (QASPSQSLSPAPSLESYSSS) are enriched in low complexity. The bHLH domain maps to 124 to 178 (QRRRKASEREKLRMRTLADALHTLRNYLPPVYSQRGQPLTKIQTLKYTIKYIGEL).

It localises to the nucleus. Its function is as follows. Involved in specifying the paraxial, but not dorsal, mesoderm. May regulate the expression of T-box transcription factors required for mesoderm formation and differentiation. The chain is Mesogenin-1 (MSGN1) from Homo sapiens (Human).